A 111-amino-acid chain; its full sequence is Large ribosomal subunit protein uL22 (111 aa).

The protein belongs to the universal ribosomal protein uL22 family. Part of the 50S ribosomal subunit.

This protein binds specifically to 23S rRNA; its binding is stimulated by other ribosomal proteins, e.g. L4, L17, and L20. It is important during the early stages of 50S assembly. It makes multiple contacts with different domains of the 23S rRNA in the assembled 50S subunit and ribosome. In terms of biological role, the globular domain of the protein is located near the polypeptide exit tunnel on the outside of the subunit, while an extended beta-hairpin is found that lines the wall of the exit tunnel in the center of the 70S ribosome. This Clostridium acetobutylicum (strain ATCC 824 / DSM 792 / JCM 1419 / IAM 19013 / LMG 5710 / NBRC 13948 / NRRL B-527 / VKM B-1787 / 2291 / W) protein is Large ribosomal subunit protein uL22.